The following is a 130-amino-acid chain: Small ribosomal subunit protein uS8 (130 aa).

It belongs to the universal ribosomal protein uS8 family. Part of the 30S ribosomal subunit.

Functionally, one of the primary rRNA binding proteins, it binds directly to 16S rRNA central domain where it helps coordinate assembly of the platform of the 30S subunit. The chain is Small ribosomal subunit protein uS8 from Thermococcus onnurineus (strain NA1).